The following is a 252-amino-acid chain: Nicotinamide/nicotinic acid mononucleotide adenylyltransferase 3 (252 aa).

2 residues coordinate NAD(+): Ser-14 and Phe-15. 2 residues coordinate ATP: His-22 and Lys-56. 4 residues coordinate NAD(+): Trp-90, Thr-93, Gly-135, and Asp-137. Position 140 (Lys-140) interacts with ATP. 4 residues coordinate NAD(+): Leu-147, Trp-148, Arg-167, and Asn-198. 203–206 (TYIR) serves as a coordination point for ATP.

Belongs to the eukaryotic NMN adenylyltransferase family. As to quaternary structure, homotetramer. The cofactor is Mg(2+). As to expression, expressed in lung and spleen with lower levels in placenta and kidney.

Its subcellular location is the mitochondrion. The catalysed reaction is beta-nicotinamide D-ribonucleotide + ATP + H(+) = diphosphate + NAD(+). It catalyses the reaction nicotinate beta-D-ribonucleotide + ATP + H(+) = deamido-NAD(+) + diphosphate. The protein operates within cofactor biosynthesis; NAD(+) biosynthesis; NAD(+) from nicotinamide D-ribonucleotide: step 1/1. Its pathway is cofactor biosynthesis; NAD(+) biosynthesis; deamido-NAD(+) from nicotinate D-ribonucleotide: step 1/1. Activity is strongly inhibited by galotannin. Inhibited by P1-(adenosine-5')-P4-(nicotinic-acid-riboside-5')-tetraphosphate (Nap4AD). Its function is as follows. Catalyzes the formation of NAD(+) from nicotinamide mononucleotide (NMN) and ATP. Can also use the deamidated form; nicotinic acid mononucleotide (NaMN) as substrate with the same efficiency. Can use triazofurin monophosphate (TrMP) as substrate. Can also use GTP and ITP as nucleotide donors. Also catalyzes the reverse reaction, i.e. the pyrophosphorolytic cleavage of NAD(+). For the pyrophosphorolytic activity, can use NAD(+), NADH, NaAD, nicotinic acid adenine dinucleotide phosphate (NHD), nicotinamide guanine dinucleotide (NGD) as substrates. Fails to cleave phosphorylated dinucleotides NADP(+), NADPH and NaADP(+). Protects against axonal degeneration following injury. May be involved in the maintenance of axonal integrity. Also functions as a stress-response chaperone protein that prevents toxic aggregation of proteins; this function may be independent of its NAD(+) synthesis activity. This Homo sapiens (Human) protein is Nicotinamide/nicotinic acid mononucleotide adenylyltransferase 3.